A 723-amino-acid polypeptide reads, in one-letter code: MSYSVTLTGPGPWGFRLQGGKDFNMPLTISRITPGSKAAQSQLSQGDLVVAIDGVNTDTMTHLEAQNKIKSASYNLSLTLQKSKRPIPISTTAPPIQSPLPVIPHQKDPALDTNGSLATPSPSPEARASPGALEFGDTFSSSFSQTSVCSPLMEASGPVLPLGSPVAKASSEGAQGSVSPKVLPGPSQPRQYNNPIGLYSAETLREMAQMYQMSLRGKASGAGLLGGSLPVKDLAVDSASPVYQAVIKTQSKPEDEADEWARRSSNLQSRSFRILAQMTGTEYMQDPDEEALRRSSTPIEHAPVCTSQATSPLLPASAQSPAAASPIAASPTLATAAATHAAAASAAGPAASPVENPRPQASAYSPAAAASPAPSAHTSYSEGPAAPAPKPRVVTTASIRPSVYQPVPASSYSPSPGANYSPTPYTPSPAPAYTPSPAPTYTPSPAPTYSPSPAPAYTPSPAPNYTPTPSAAYSGGPSESASRPPWVTDDSFSQKFAPGKSTTTVSKQTLPRGAPAYNPTGPQVTPLARGTFQRAERFPASSRTPLCGHCNNVIRGPFLVAMGRSWHPEEFNCAYCKTSLADVCFVEEQNNVYCERCYEQFFAPICAKCNTKIMGEVMHALRQTWHTTCFVCAACKKPFGNSLFHMEDGEPYCEKDYINLFSTKCHGCDFPVEAGDKFIEALGHTWHDTCFICAVCHVNLEGQPFYSKKDKPLCKKHAHAINV.

A PDZ domain is found at 1 to 84; the sequence is MSYSVTLTGP…NLSLTLQKSK (84 aa). Ser44, Ser98, and Asp112 each carry phosphoserine. Disordered regions lie at residues 89–134 and 164–193; these read ISTT…GALE and SPVA…RQYN. Thr119 is modified (phosphothreonine). Residues Ser121 and Ser123 each carry the phosphoserine modification. Phosphoserine is present on Ser214. Arg216 carries the omega-N-methylarginine modification. A phosphoserine mark is found at Ser220, Ser251, and Asp288. 2 disordered regions span residues 280-423 and 436-525; these read GTEY…YSPT and SPAP…PQVT. Residue Ala291 is modified to Omega-N-methylarginine. The span at 309-376 shows a compositional bias: low complexity; the sequence is ATSPLLPASA…AAAASPAPSA (68 aa). A Phosphoserine modification is found at Ile327. Omega-N-methylarginine is present on Ser330. The segment covering 436–466 has biased composition (pro residues); it reads SPAPTYTPSPAPTYSPSPAPAYTPSPAPNYT. Over residues 490-509 the composition is skewed to polar residues; it reads DSFSQKFAPGKSTTTVSKQT. Omega-N-methylarginine occurs at positions 512 and 529. 3 LIM zinc-binding domains span residues 545-603, 604-663, and 664-723; these read PLCG…QFFA, PICA…LFST, and KCHG…AINV.

Interacts via its LIM domains with various PKC isoforms. Interacts via its PDZ domain with the ACTN2 C-terminal region. Interacts with MYOZ1, MYOZ2 and MYOZ3. Expressed primarily in adult heart and skeletal muscle, and detected at lower levels in lung. Isoforms are expressed in a tissue-specific manner. Isoform 1, isoform 3 and isoform 5 are expressed in heart, whereas isoform 2, isoform 4 and isoform 6 are expressed in skeletal muscle.

It localises to the cytoplasm. Its subcellular location is the perinuclear region. It is found in the cell projection. The protein resides in the pseudopodium. The protein localises to the cytoskeleton. It localises to the myofibril. Its subcellular location is the sarcomere. It is found in the z line. Its function is as follows. May function as an adapter in striated muscle to couple protein kinase C-mediated signaling via its LIM domains to the cytoskeleton. This Mus musculus (Mouse) protein is LIM domain-binding protein 3.